Here is a 234-residue protein sequence, read N- to C-terminus: Sugar fermentation stimulation protein homolog (234 aa).

This sequence belongs to the SfsA family.

The polypeptide is Sugar fermentation stimulation protein homolog (Photobacterium profundum (strain SS9)).